Consider the following 443-residue polypeptide: 23S rRNA (uracil(1939)-C(5))-methyltransferase RlmD (443 aa).

The TRAM domain occupies 8–66 (KPLPAEPIAAHIESFAHDGKGIAHVDGRVVFVDGALPGEDVTFVYTEIKRDYAAGRVVE). Residues cysteine 79, cysteine 85, cysteine 88, and cysteine 167 each contribute to the [4Fe-4S] cluster site. S-adenosyl-L-methionine is bound by residues glutamine 276, phenylalanine 305, asparagine 310, glutamate 326, aspartate 353, and aspartate 374. The active-site Nucleophile is the cysteine 400.

This sequence belongs to the class I-like SAM-binding methyltransferase superfamily. RNA M5U methyltransferase family. RlmD subfamily.

The catalysed reaction is uridine(1939) in 23S rRNA + S-adenosyl-L-methionine = 5-methyluridine(1939) in 23S rRNA + S-adenosyl-L-homocysteine + H(+). In terms of biological role, catalyzes the formation of 5-methyl-uridine at position 1939 (m5U1939) in 23S rRNA. The polypeptide is 23S rRNA (uracil(1939)-C(5))-methyltransferase RlmD (Methylococcus capsulatus (strain ATCC 33009 / NCIMB 11132 / Bath)).